Consider the following 186-residue polypeptide: RNA-free ribonuclease P (186 aa).

Belongs to the HARP family.

The enzyme catalyses Endonucleolytic cleavage of RNA, removing 5'-extranucleotides from tRNA precursor.. In terms of biological role, RNA-free RNase P that catalyzes the removal of the 5'-leader sequence from pre-tRNA to produce the mature 5'-terminus. The polypeptide is RNA-free ribonuclease P (Hydrogenobaculum sp. (strain Y04AAS1)).